Reading from the N-terminus, the 239-residue chain is 1-(5-phosphoribosyl)-5-[(5-phosphoribosylamino)methylideneamino] imidazole-4-carboxamide isomerase (239 aa).

The active-site Proton acceptor is aspartate 8. Aspartate 129 acts as the Proton donor in catalysis.

It belongs to the HisA/HisF family.

Its subcellular location is the cytoplasm. The enzyme catalyses 1-(5-phospho-beta-D-ribosyl)-5-[(5-phospho-beta-D-ribosylamino)methylideneamino]imidazole-4-carboxamide = 5-[(5-phospho-1-deoxy-D-ribulos-1-ylimino)methylamino]-1-(5-phospho-beta-D-ribosyl)imidazole-4-carboxamide. It participates in amino-acid biosynthesis; L-histidine biosynthesis; L-histidine from 5-phospho-alpha-D-ribose 1-diphosphate: step 4/9. This chain is 1-(5-phosphoribosyl)-5-[(5-phosphoribosylamino)methylideneamino] imidazole-4-carboxamide isomerase, found in Pelagibacter ubique (strain HTCC1062).